We begin with the raw amino-acid sequence, 384 residues long: Carbamoyl phosphate synthase small chain (384 aa).

The segment at 1-192 is CPSase; it reads MMKRIPAILV…LTDNIRVHRV (192 aa). Positions 51, 244, and 246 each coordinate L-glutamine. Residues 196 to 382 enclose the Glutamine amidotransferase type-1 domain; it reads KVIVIDFGVK…IEIMTKSKNK (187 aa). The Nucleophile role is filled by C272. L-glutamine contacts are provided by M273, Q276, N312, G314, and F315. Catalysis depends on residues H355 and E357.

The protein belongs to the CarA family. As to quaternary structure, composed of two chains; the small (or glutamine) chain promotes the hydrolysis of glutamine to ammonia, which is used by the large (or ammonia) chain to synthesize carbamoyl phosphate. Tetramer of heterodimers (alpha,beta)4.

The protein resides in the plastid. Its subcellular location is the chloroplast. The enzyme catalyses hydrogencarbonate + L-glutamine + 2 ATP + H2O = carbamoyl phosphate + L-glutamate + 2 ADP + phosphate + 2 H(+). The catalysed reaction is L-glutamine + H2O = L-glutamate + NH4(+). It participates in amino-acid biosynthesis; L-arginine biosynthesis; carbamoyl phosphate from bicarbonate: step 1/1. It functions in the pathway pyrimidine metabolism; UMP biosynthesis via de novo pathway; (S)-dihydroorotate from bicarbonate: step 1/3. In terms of biological role, small subunit of the glutamine-dependent carbamoyl phosphate synthetase (CPSase). CPSase catalyzes the formation of carbamoyl phosphate from the ammonia moiety of glutamine, carbonate, and phosphate donated by ATP, constituting the first step of 2 biosynthetic pathways, one leading to arginine and/or urea and the other to pyrimidine nucleotides. The small subunit (glutamine amidotransferase) binds and cleaves glutamine to supply the large subunit with the substrate ammonia. The protein is Carbamoyl phosphate synthase small chain of Pyropia yezoensis (Susabi-nori).